An 816-amino-acid chain; its full sequence is Probable E3 ubiquitin-protein ligase hulA (816 aa).

The 112-residue stretch at 1–112 (MGSNLPAQPN…QMGGDEMLTR (112 aa)) folds into the C2 domain. 2 disordered regions span residues 134–238 (NLST…GWER) and 254–354 (RTTT…YFVD). Positions 160–178 (VPQVAPSSSHPAASGAAPV) are enriched in low complexity. The segment covering 181–192 (SASNPSLNPQRV) has biased composition (polar residues). Residues 193 to 213 (PSTTRPSSTAAPASAAGAAAS) show a composition bias toward low complexity. 2 stretches are compositionally biased toward polar residues: residues 214–227 (NTHGSRTNLSSFED) and 254–267 (RTTTWTRPSSNYNE). The WW 1 domain occupies 230–263 (GRLPAGWERREDNLGRTYYVDHNTRTTTWTRPSS). Basic and acidic residues predominate over residues 268–295 (HAQRSQREANMQLERRAHQSRMLPEDRT). The span at 296 to 310 (GANSPNLPESSQQAH) shows a compositional bias: polar residues. Residues 325-334 (ATGATTAGTG) show a composition bias toward low complexity. 2 WW domains span residues 334–367 (GELPPGWEQRTTPEGRPYFVDHNTRTTTWVDPRR) and 394–427 (GPLPSGWEMRLTNTARVYFVDHNTKTTTWDDPRL). Residues 483–816 (SASDLKKRLM…VEETLGFGQE (334 aa)) enclose the HECT domain. Cys784 acts as the Glycyl thioester intermediate in catalysis.

The protein belongs to the RSP5/NEDD4 family. Interacts with creD.

The protein resides in the cytoplasm. The catalysed reaction is S-ubiquitinyl-[E2 ubiquitin-conjugating enzyme]-L-cysteine + [acceptor protein]-L-lysine = [E2 ubiquitin-conjugating enzyme]-L-cysteine + N(6)-ubiquitinyl-[acceptor protein]-L-lysine.. The protein operates within protein modification; protein ubiquitination. In terms of biological role, E3 ubiquitin-protein ligase which accepts ubiquitin from an E2 ubiquitin-conjugating enzyme in the form of a thioester and then directly transfers the ubiquitin to targeted substrates. Probably involved in the regulatory network controlling carbon source utilization. This is Probable E3 ubiquitin-protein ligase hulA (hulA) from Neosartorya fischeri (strain ATCC 1020 / DSM 3700 / CBS 544.65 / FGSC A1164 / JCM 1740 / NRRL 181 / WB 181) (Aspergillus fischerianus).